A 399-amino-acid polypeptide reads, in one-letter code: DNA replication and repair protein RecF (399 aa).

Residue 30 to 37 participates in ATP binding; the sequence is GSNGIGKT.

Belongs to the RecF family.

It localises to the cytoplasm. Its function is as follows. The RecF protein is involved in DNA metabolism; it is required for DNA replication and normal SOS inducibility. RecF binds preferentially to single-stranded, linear DNA. It also seems to bind ATP. The polypeptide is DNA replication and repair protein RecF (Paenarthrobacter aurescens (strain TC1)).